Reading from the N-terminus, the 553-residue chain is Sensitive to high expression protein 9 homolog, mitochondrial (553 aa).

The disordered stretch occupies residues 61 to 174 (FFSTQPPKDT…TAQPELPSRT (114 aa)). A compositionally biased stretch (polar residues) spans 62 to 84 (FSTQPPKDTPENMNNKETGSSNV). Residues 103–116 (AKEDTTDATNKSET) are compositionally biased toward basic and acidic residues. Low complexity predominate over residues 133–160 (SDVSSASTSDSANSSETTTTTSETTPEN). Coiled-coil stretches lie at residues 210-241 (SAIE…HNYK) and 277-309 (RLDH…DLNA). A helical membrane pass occupies residues 331-351 (WGTWGLMGVNVLLFLVLQFVA). Residues 352–523 (EPWRRKRLMK…RIDLKMRDVS (172 aa)) are Mitochondrial intermembrane-facing. 2 disordered regions span residues 408–428 (ALAS…RTEG) and 443–497 (AEEA…QTLS). 2 stretches are compositionally biased toward low complexity: residues 443 to 473 (AEEA…QTPE) and 484 to 495 (TWKQTAQKWQQT). The chain crosses the membrane as a helical span at residues 524–544 (LLALESAATGAAVVASVAFFV). The Mitochondrial matrix segment spans residues 545-553 (LRSSGSGKA).

It belongs to the SHE9 family. Homooligomer.

It is found in the mitochondrion inner membrane. Its function is as follows. Required for the maintenance of the structure of the mitochondrial inner membrane. Involved in mitochondrial morphology. Causes growth arrest when highly overexpressed. The protein is Sensitive to high expression protein 9 homolog, mitochondrial (she-9) of Neurospora crassa (strain ATCC 24698 / 74-OR23-1A / CBS 708.71 / DSM 1257 / FGSC 987).